We begin with the raw amino-acid sequence, 102 residues long: NADH-quinone oxidoreductase subunit K (102 aa).

Helical transmembrane passes span 5 to 25, 31 to 51, and 62 to 82; these read LAHY…GIFL, IILL…FVAF, and VFVF…LAIL.

Belongs to the complex I subunit 4L family. In terms of assembly, NDH-1 is composed of 14 different subunits. Subunits NuoA, H, J, K, L, M, N constitute the membrane sector of the complex.

The protein localises to the cell inner membrane. The enzyme catalyses a quinone + NADH + 5 H(+)(in) = a quinol + NAD(+) + 4 H(+)(out). NDH-1 shuttles electrons from NADH, via FMN and iron-sulfur (Fe-S) centers, to quinones in the respiratory chain. The immediate electron acceptor for the enzyme in this species is believed to be ubiquinone. Couples the redox reaction to proton translocation (for every two electrons transferred, four hydrogen ions are translocated across the cytoplasmic membrane), and thus conserves the redox energy in a proton gradient. The chain is NADH-quinone oxidoreductase subunit K from Bordetella avium (strain 197N).